Consider the following 268-residue polypeptide: Short chain dehydrogenase/reductase dpchG (268 aa).

Valine 18, aspartate 70, asparagine 97, lysine 131, tyrosine 165, and lysine 169 together coordinate NADP(+). The active-site Proton acceptor is the tyrosine 165. The active-site Lowers pKa of active site Tyr is the lysine 169.

The protein belongs to the short-chain dehydrogenases/reductases (SDR) family.

Its pathway is secondary metabolite biosynthesis; terpenoid biosynthesis. Its function is as follows. Short chain dehydrogenase/reductase; part of the gene cluster that mediates the biosynthesis of the diterpenoid pyrones higginsianins A and B. The first step of the pathway is the synthesis of the alpha-pyrone moiety by the polyketide synthase dpchA via condensation of one acetyl-CoA starter unit with 3 malonyl-CoA units and 2 methylations. The alpha-pyrone is then combined with geranylgeranyl pyrophosphate (GGPP) formed by the GGPP synthase dpchD through the action of the prenyltransferase dpchC to yield a linear alpha-pyrone diterpenoid. Subsequent steps in the diterpenoid pyrone biosynthetic pathway involve the decalin core formation, which is initiated by the epoxidation of the C10-C11 olefin by the FAD-dependent oxidoreductase dpchE, and is followed by a cyclization cascade catalyzed by the terpene cyclase dpchB. The short chain dehydrogenase/reductase dpchG then oxidizes the 8S hydroxy group to a ketone and the short chain dehydrogenase/reductase dpchH reduces the ketone to the 8R hydroxy group to yield higginsianin B. Finally, the FAD-dependent oxidoreductase dpchF converts higginsianin B into higginsianin A. This is Short chain dehydrogenase/reductase dpchG from Colletotrichum higginsianum (strain IMI 349063) (Crucifer anthracnose fungus).